We begin with the raw amino-acid sequence, 99 residues long: NADH-ubiquinone oxidoreductase chain 4L (99 aa).

3 consecutive transmembrane segments (helical) span residues 1–21, 25–45, and 56–76; these read MTIY…FFTQ, ILSL…SVAV, and VMIL…SLLV.

The protein belongs to the complex I subunit 4L family.

The protein resides in the mitochondrion membrane. It carries out the reaction a ubiquinone + NADH + 5 H(+)(in) = a ubiquinol + NAD(+) + 4 H(+)(out). Functionally, core subunit of the mitochondrial membrane respiratory chain NADH dehydrogenase (Complex I) that is believed to belong to the minimal assembly required for catalysis. Complex I functions in the transfer of electrons from NADH to the respiratory chain. The immediate electron acceptor for the enzyme is believed to be ubiquinone. This is NADH-ubiquinone oxidoreductase chain 4L (ND4L) from Albinaria caerulea (Land snail).